The chain runs to 895 residues: Stonin-2 (895 aa).

Disordered regions lie at residues 15-119 (WVSF…PPHK), 145-222 (SESS…APPV), and 234-280 (EDNE…KSTL). The segment covering 64 to 73 (SHSEQDDSSE) has biased composition (basic and acidic residues). Positions 145-193 (SESSWTTHSEDTSSPSVAPSYTDLQLINTEEQASGRASGTDSTDNSSSL) are enriched in polar residues. Over residues 241 to 251 (PSPPVPSPKKP) the composition is skewed to pro residues. A Phosphothreonine modification is found at T253. A phosphoserine mark is found at S278 and S299. 2 short sequence motifs (NPF) span residues 310-312 (NPF) and 326-328 (NPF). A disordered region spans residues 386-421 (QIDDPDPVGNTALPDDDPTASVELDAPSPASALSQP). Positions 424-557 (GWPMMLRIPE…DLPVLSMDLS (134 aa)) constitute an SHD domain. Positions 565 to 872 (EEEITVDVRD…AHYSYKVEIE (308 aa)) constitute an MHD domain. A Phosphoserine modification is found at S759.

It belongs to the Stoned B family. As to quaternary structure, interacts with the second C2 domain of synaptotagmins SYT1 and SYT2. Interacts with EPS15, EPS15R and ITSN1. Interacts indirectly with the AP-2 adapter complex. Interacts with TOR1A and COPS4; the interaction controls STON2 protein stability. Phosphorylated in vitro by PKD. In terms of processing, neddylated; deneddylated via its interaction with the COP9 signalosome (CSN) complex through TOR1A and COPS4. Post-translationally, ubiquitinated; leading to its degradation.

The protein localises to the cytoplasm. Its subcellular location is the membrane. It is found in the synapse. The protein resides in the synaptosome. Adapter protein involved in endocytic machinery. Involved in the synaptic vesicle recycling. May facilitate clathrin-coated vesicle uncoating. This chain is Stonin-2 (Ston2), found in Mus musculus (Mouse).